A 1161-amino-acid chain; its full sequence is PAN2-PAN3 deadenylation complex catalytic subunit pan2 (1161 aa).

WD repeat units lie at residues 20-59 (GLPTAATTIAFDDVSELLWAGNEFGRITSFYGPELQRYTS) and 276-315 (ANVSFMLGIDISPSGEALAINDAECSIHLWGSPSKIHFNE). A linker region spans residues 316 to 452 (MSKEVEFADV…GAKLNGEAED (137 aa)). One can recognise a USP domain in the interval 453-822 (DPLLKYSNVE…SPCILAYQAK (370 aa)). Positions 871–1049 (VALDTEFVDL…IEDARMALRL (179 aa)) constitute an Exonuclease domain. Asp874, Glu876, Asp983, and Asp1042 together coordinate a divalent metal cation. Residues 1009 to 1060 (NRRLSLRYLAWAVFKEYIQEEPADNNQGHDSIEDARMALRLWKKFQEYEDAG) form a WD 4 repeat. The segment at 1092–1161 (RPGTAVTMQN…GDFFGGSPLK (70 aa)) is disordered. Residues 1097–1110 (VTMQNSSGRNTPST) show a composition bias toward polar residues. Positions 1116–1129 (AATATATTSAPATP) are enriched in low complexity. Over residues 1145-1155 (TFGGPGAGDFF) the composition is skewed to gly residues.

Belongs to the peptidase C19 family. PAN2 subfamily. In terms of assembly, forms a heterotrimer with an asymmetric homodimer of the regulatory subunit pan3 to form the poly(A)-nuclease (PAN) deadenylation complex. A divalent metal cation is required as a cofactor.

It localises to the cytoplasm. It catalyses the reaction Exonucleolytic cleavage of poly(A) to 5'-AMP.. Positively regulated by the regulatory subunit pan3. Catalytic subunit of the poly(A)-nuclease (PAN) deadenylation complex, one of two cytoplasmic mRNA deadenylases involved in mRNA turnover. PAN specifically shortens poly(A) tails of RNA and the activity is stimulated by poly(A)-binding protein pab1. PAN deadenylation is followed by rapid degradation of the shortened mRNA tails by the CCR4-NOT complex. Deadenylated mRNAs are then degraded by two alternative mechanisms, namely exosome-mediated 3'-5' exonucleolytic degradation, or deadenylation-dependent mRNA decaping and subsequent 5'-3' exonucleolytic degradation by xrn1. May also be involved in post-transcriptional maturation of mRNA poly(A) tails. This Neosartorya fischeri (strain ATCC 1020 / DSM 3700 / CBS 544.65 / FGSC A1164 / JCM 1740 / NRRL 181 / WB 181) (Aspergillus fischerianus) protein is PAN2-PAN3 deadenylation complex catalytic subunit pan2.